Here is a 471-residue protein sequence, read N- to C-terminus: Putative multidrug resistance protein MdtD (471 aa).

Residues 1 to 11 are Periplasmic-facing; sequence MTDLPDSTRWQ. A helical membrane pass occupies residues 12 to 32; it reads LWIVAFGFFMQSLDTTIVNTA. Topologically, residues 33–48 are cytoplasmic; that stretch reads LPSMAQSLGESPLHMH. Residues 49–69 traverse the membrane as a helical segment; sequence MVIVSYVLTVAVMLPASGWLA. At 70–76 the chain is on the periplasmic side; it reads DKVGVRN. A helical transmembrane segment spans residues 77 to 97; that stretch reads IFFTAIVLFTLGSLFCALSAT. At 98 to 101 the chain is on the cytoplasmic side; that stretch reads LNEL. A helical transmembrane segment spans residues 102-124; that stretch reads LLARALQGVGGAMMVPVGRLTVM. Topologically, residues 125-137 are periplasmic; it reads KIVPREQYMAAMT. A helical membrane pass occupies residues 138–158; that stretch reads FVTLPGQVGPLLGPALGGLLV. Over 159 to 164 the chain is Cytoplasmic; sequence EYASWH. Residues 165 to 185 traverse the membrane as a helical segment; it reads WIFLINIPVGIIGAIATLMLM. Residues 186–196 are Periplasmic-facing; sequence PNYTMQTRRFD. The chain crosses the membrane as a helical span at residues 197 to 217; that stretch reads LSGFLLLAVGMAVLTLALDGS. The Cytoplasmic portion of the chain corresponds to 218 to 224; the sequence is KGTGLSP. The chain crosses the membrane as a helical span at residues 225–245; the sequence is LAIAGLAAIGVVALVLYLLHA. Over 246 to 262 the chain is Periplasmic; the sequence is RNNNRALFSLKLFRTRT. The helical transmembrane segment at 263–283 threads the bilayer; it reads FSLGLAGSFAGRIGSGMLPFM. Over 284 to 285 the chain is Cytoplasmic; that stretch reads TP. The chain crosses the membrane as a helical span at residues 286-306; the sequence is VFLQIGLGFSPFHAGLMMIPM. Over 307 to 341 the chain is Periplasmic; that stretch reads VLGSMGMKRIVVQVVNRFGYRRVLVATTLGLSLVT. Residues 342 to 362 form a helical membrane-spanning segment; the sequence is LLFMTTALLGWYYVLPFVLFL. Over 363–395 the chain is Cytoplasmic; it reads QGMVNSTRFSSMNTLTLKDLPDNLASSGNSLLS. The helical transmembrane segment at 396–416 threads the bilayer; sequence MIMQLSMSIGVTIAGLLLGLF. Residues 417–430 are Periplasmic-facing; the sequence is GSQHVSVDSSTTQT. A helical membrane pass occupies residues 431 to 451; that stretch reads VFMYTWLSMALIIALPAFIFA. Residues 452–471 are Cytoplasmic-facing; it reads RVPNDTHQNVAISRRKRSAQ.

It belongs to the major facilitator superfamily. TCR/Tet family.

Its subcellular location is the cell inner membrane. The chain is Putative multidrug resistance protein MdtD from Escherichia fergusonii (strain ATCC 35469 / DSM 13698 / CCUG 18766 / IAM 14443 / JCM 21226 / LMG 7866 / NBRC 102419 / NCTC 12128 / CDC 0568-73).